The primary structure comprises 79 residues: MRFIIRTVMLIALVWIGLLLSGYGVLIGSKENAAGLGLQCTYLTARGTSTVQYLHTKSGFLGITDCPLLRKSNIVVDNG.

The N-terminal stretch at 1–33 is a signal peptide; it reads MRFIIRTVMLIALVWIGLLLSGYGVLIGSKENA.

This is an uncharacterized protein from Escherichia coli O6:K15:H31 (strain 536 / UPEC).